A 459-amino-acid polypeptide reads, in one-letter code: Nuclear distribution protein PAC1-2 (459 aa).

Residues 56–83 are a coiled coil; sequence TSIVRLQKKIMDLESRNAALQTELANLT. 8 WD repeats span residues 108–149, 151–191, 195–244, 246–284, 306–348, 350–389, 394–438, and 440–459; these read SHRD…RTVK, HTRA…KNIR, GHDH…KTLR, HTAW…SDHK, QYLA…LGTL, GHDN…KCVK, AHER…DTPD, and QVRC…VFAD.

It belongs to the WD repeat LIS1/nudF family. Self-associates. Interacts with NDL1 and dynein.

Its subcellular location is the cytoplasm. The protein localises to the cytoskeleton. The protein resides in the spindle pole. Its function is as follows. Positively regulates the activity of the minus-end directed microtubule motor protein dynein. May enhance dynein-mediated microtubule sliding by targeting dynein to the microtubule plus end. Required for nuclear migration during vegetative growth as well as development. Required for retrograde early endosome (EE) transport from the hyphal tip. Required for localization of dynein to the mitotic spindle poles. Recruits additional proteins to the dynein complex at SPBs. This chain is Nuclear distribution protein PAC1-2, found in Uncinocarpus reesii (strain UAMH 1704).